Here is a 176-residue protein sequence, read N- to C-terminus: Orotate phosphoribosyltransferase (176 aa).

5-phospho-alpha-D-ribose 1-diphosphate is bound by residues Arg90, Lys91, Lys94, and 116–124 (EDVTTTGGS). Orotate is bound by residues Thr120 and Arg148.

It belongs to the purine/pyrimidine phosphoribosyltransferase family. PyrE subfamily. In terms of assembly, homodimer. The cofactor is Mg(2+).

It carries out the reaction orotidine 5'-phosphate + diphosphate = orotate + 5-phospho-alpha-D-ribose 1-diphosphate. Its pathway is pyrimidine metabolism; UMP biosynthesis via de novo pathway; UMP from orotate: step 1/2. Catalyzes the transfer of a ribosyl phosphate group from 5-phosphoribose 1-diphosphate to orotate, leading to the formation of orotidine monophosphate (OMP). This chain is Orotate phosphoribosyltransferase, found in Methanocaldococcus jannaschii (strain ATCC 43067 / DSM 2661 / JAL-1 / JCM 10045 / NBRC 100440) (Methanococcus jannaschii).